The primary structure comprises 407 residues: Argininosuccinate synthase (407 aa).

Residues 16–24 and Ala-44 each bind ATP; that span reads AYSGGLDTS. 2 residues coordinate L-citrulline: Tyr-96 and Ser-101. Gly-126 is a binding site for ATP. The L-aspartate site is built by Thr-128, Asn-132, and Asp-133. Asn-132 contributes to the L-citrulline binding site. Residues Arg-136, Ser-185, Ser-194, Glu-270, and Tyr-282 each coordinate L-citrulline.

Belongs to the argininosuccinate synthase family. Type 1 subfamily. In terms of assembly, homotetramer.

It localises to the cytoplasm. The enzyme catalyses L-citrulline + L-aspartate + ATP = 2-(N(omega)-L-arginino)succinate + AMP + diphosphate + H(+). It functions in the pathway amino-acid biosynthesis; L-arginine biosynthesis; L-arginine from L-ornithine and carbamoyl phosphate: step 2/3. In Shewanella sp. (strain W3-18-1), this protein is Argininosuccinate synthase.